The sequence spans 215 residues: Large ribosomal subunit protein uL3c (215 aa).

The segment at 132–151 (RGAMSHGSKSHRRPGSIGAG) is disordered.

The protein belongs to the universal ribosomal protein uL3 family. Part of the 50S ribosomal subunit.

Its subcellular location is the plastid. It localises to the chloroplast. One of the primary rRNA binding proteins, it binds directly near the 3'-end of the 23S rRNA, where it nucleates assembly of the 50S subunit. The sequence is that of Large ribosomal subunit protein uL3c (rpl3) from Cyanidium caldarium (Red alga).